The chain runs to 435 residues: Probable xyloglucan galactosyltransferase GT19 (435 aa).

The Cytoplasmic portion of the chain corresponds to 1-6; sequence MASKST. Residues 7-23 traverse the membrane as a helical; Signal-anchor for type II membrane protein segment; it reads VTTLTIFFFFFFFFIEP. The Lumenal segment spans residues 24–435; that stretch reads KVQSQQISAV…GVLDRIISRV (412 aa). Residues Asn-140, Asn-203, and Asn-277 are each glycosylated (N-linked (GlcNAc...) asparagine).

The protein belongs to the glycosyltransferase 47 family. Expressed in roots, hypocotyls, cotyledons, leaves, stems, stamens and pollen grains.

It is found in the golgi apparatus membrane. Functions in xyloglucan synthesis by adding side chains to the xylosylated glucan backbone. Involved in the galactosylation of hemicellulose xyloglucan. This Arabidopsis thaliana (Mouse-ear cress) protein is Probable xyloglucan galactosyltransferase GT19.